Here is a 204-residue protein sequence, read N- to C-terminus: Large ribosomal subunit protein uL4 (204 aa).

Residues 42 to 55 are compositionally biased toward polar residues; that stretch reads GSRQGSKAQKNRSA. Residues 42 to 85 are disordered; it reads GSRQGSKAQKNRSAVSGGGKRPWAQKGTGRARAGTTRGPIWRSG. A compositionally biased stretch (low complexity) spans 68–79; sequence GTGRARAGTTRG.

This sequence belongs to the universal ribosomal protein uL4 family. As to quaternary structure, part of the 50S ribosomal subunit.

Functionally, one of the primary rRNA binding proteins, this protein initially binds near the 5'-end of the 23S rRNA. It is important during the early stages of 50S assembly. It makes multiple contacts with different domains of the 23S rRNA in the assembled 50S subunit and ribosome. In terms of biological role, forms part of the polypeptide exit tunnel. The polypeptide is Large ribosomal subunit protein uL4 (Vesicomyosocius okutanii subsp. Calyptogena okutanii (strain HA)).